We begin with the raw amino-acid sequence, 623 residues long: Scarecrow-like protein 22 (623 aa).

Disordered regions lie at residues 62–90 (RSPS…AAAA) and 179–203 (PNPG…QPGS). The segment covering 63-80 (SPSPFVSSSTTTLSSSHG) has biased composition (low complexity). A GRAS domain is found at 235-622 (NDQDQSAVII…KELVTVSAWK (388 aa)). The segment at 242 to 311 (VIIDQLFSAA…ALHSLLQDSS (70 aa)) is leucine repeat I (LRI). The VHIID stretch occupies residues 330-398 (YRAFSETSPF…SSAPSLKITA (69 aa)). A VHIID motif is present at residues 361 to 365 (IHIVD). Residues 413-448 (FTEENLRSFAGETGVSFEIELLNMEILLNPTYWPLS) are leucine repeat II (LRII). The interval 458 to 545 (IAVNLPISSM…RFCVQPSIQK (88 aa)) is PFYRE. The segment at 548–622 (TNRYRWMERS…KELVTVSAWK (75 aa)) is SAW.

It belongs to the GRAS family. As to expression, expressed in seedlings, roots, leaves and flowers.

It is found in the nucleus. Probable transcription factor involved in plant development. This chain is Scarecrow-like protein 22 (SCL22), found in Arabidopsis thaliana (Mouse-ear cress).